Reading from the N-terminus, the 261-residue chain is 4-hydroxy-tetrahydrodipicolinate reductase (261 aa).

An NAD(+)-binding site is contributed by 9-14; it reads GCLGRM. Arg-36 serves as a coordination point for NADP(+). NAD(+) contacts are provided by residues 97-99 and 118-121; these read GTT and SANM. His-151 (proton donor/acceptor) is an active-site residue. His-152 is a (S)-2,3,4,5-tetrahydrodipicolinate binding site. Lys-155 serves as the catalytic Proton donor. A (S)-2,3,4,5-tetrahydrodipicolinate-binding site is contributed by 161-162; it reads GT.

This sequence belongs to the DapB family.

The protein localises to the cytoplasm. It catalyses the reaction (S)-2,3,4,5-tetrahydrodipicolinate + NAD(+) + H2O = (2S,4S)-4-hydroxy-2,3,4,5-tetrahydrodipicolinate + NADH + H(+). The catalysed reaction is (S)-2,3,4,5-tetrahydrodipicolinate + NADP(+) + H2O = (2S,4S)-4-hydroxy-2,3,4,5-tetrahydrodipicolinate + NADPH + H(+). Its pathway is amino-acid biosynthesis; L-lysine biosynthesis via DAP pathway; (S)-tetrahydrodipicolinate from L-aspartate: step 4/4. Catalyzes the conversion of 4-hydroxy-tetrahydrodipicolinate (HTPA) to tetrahydrodipicolinate. This is 4-hydroxy-tetrahydrodipicolinate reductase from Wolbachia sp. subsp. Drosophila simulans (strain wRi).